A 530-amino-acid polypeptide reads, in one-letter code: Phosphoenolpyruvate carboxykinase (ATP) (530 aa).

Residues arginine 59, tyrosine 198, and lysine 204 each contribute to the substrate site. ATP is bound by residues lysine 204, histidine 223, and 239–247 (GLSGTGKTT). Mn(2+) contacts are provided by lysine 204 and histidine 223. Aspartate 260 is a Mn(2+) binding site. ATP is bound by residues glutamate 288, arginine 325, 440 to 441 (RI), and threonine 446. A substrate-binding site is contributed by arginine 325.

It belongs to the phosphoenolpyruvate carboxykinase (ATP) family. Mn(2+) serves as cofactor.

It localises to the cytoplasm. The enzyme catalyses oxaloacetate + ATP = phosphoenolpyruvate + ADP + CO2. The protein operates within carbohydrate biosynthesis; gluconeogenesis. Functionally, involved in the gluconeogenesis. Catalyzes the conversion of oxaloacetate (OAA) to phosphoenolpyruvate (PEP) through direct phosphoryl transfer between the nucleoside triphosphate and OAA. The sequence is that of Phosphoenolpyruvate carboxykinase (ATP) from Azobacteroides pseudotrichonymphae genomovar. CFP2.